The sequence spans 67 residues: Small ribosomal subunit protein eS31 (67 aa).

C31, C34, C49, and C52 together coordinate Zn(2+). A C4-type zinc finger spans residues 31–52 (CPKCGAGVFMAEHLNRFACGKC).

The protein belongs to the eukaryotic ribosomal protein eS31 family. In terms of assembly, part of the 30S ribosomal subunit. It depends on Zn(2+) as a cofactor.

This chain is Small ribosomal subunit protein eS31, found in Methanococcus maripaludis (strain DSM 14266 / JCM 13030 / NBRC 101832 / S2 / LL).